Here is a 283-residue protein sequence, read N- to C-terminus: MDIINDIATVQSRCLQARQAGQRIAFVPTMGYLHEGHLSLMREGRKRGDLLVASIFVNPTQFGPKEDLASYPRDLERDAELVREVGVDILFHPTPATMYPNGYKTYVHVEGLTKTLCGESRPGHFRGVTTVVCKLFNIVQPDIALFGRKDFQQLAVLRRMAADLNLPVEVVGLPTVREKDGLAMSSRNVFLSAEERKQALALVDALRQARVAAHHGEHHARRLVGLVRERIGREPDAQIDYIKICDGDTLEGVDRIDANSVLLMAVRIGQTRLIDNNYILEEV.

Met-30–His-37 contributes to the ATP binding site. His-37 functions as the Proton donor in the catalytic mechanism. Residue Gln-61 coordinates (R)-pantoate. Gln-61 serves as a coordination point for beta-alanine. Gly-147 to Asp-150 contacts ATP. (R)-pantoate is bound at residue Gln-153. ATP-binding positions include Val-176 and Met-184–Arg-187.

This sequence belongs to the pantothenate synthetase family. In terms of assembly, homodimer.

It is found in the cytoplasm. The catalysed reaction is (R)-pantoate + beta-alanine + ATP = (R)-pantothenate + AMP + diphosphate + H(+). Its pathway is cofactor biosynthesis; (R)-pantothenate biosynthesis; (R)-pantothenate from (R)-pantoate and beta-alanine: step 1/1. Functionally, catalyzes the condensation of pantoate with beta-alanine in an ATP-dependent reaction via a pantoyl-adenylate intermediate. This is Pantothenate synthetase from Syntrophotalea carbinolica (strain DSM 2380 / NBRC 103641 / GraBd1) (Pelobacter carbinolicus).